We begin with the raw amino-acid sequence, 239 residues long: Norbelladine 4'-O-methyltransferase 5 (239 aa).

S-adenosyl-L-methionine is bound by residues Val55, Glu77, 79-80 (GV), Ser85, Asp103, and Ala132. Asp155 contacts a divalent metal cation. Asp157 is an S-adenosyl-L-methionine binding site. Asp181 and Asn182 together coordinate a divalent metal cation.

The protein belongs to the class I-like SAM-binding methyltransferase superfamily. Cation-dependent O-methyltransferase family. Mg(2+) is required as a cofactor.

The enzyme catalyses norbelladine + S-adenosyl-L-methionine = 4'-O-methylnorbelladine + S-adenosyl-L-homocysteine + H(+). It participates in alkaloid biosynthesis. 4'-O-methyltransferase converting norbelladine to 4'-O-methylnorbelladine. 4'-O-methylnorbelladine is a precursor to all Amaryllidaceae alkaloids such as galanthamine, lycorine and haemanthamine, and including haemanthamine- and crinamine-type alkaloids, promising anticancer agents. The protein is Norbelladine 4'-O-methyltransferase 5 of Narcissus aff. pseudonarcissus MK-2014 (Daffodil).